We begin with the raw amino-acid sequence, 439 residues long: CBL-interacting protein kinase 14 (439 aa).

In terms of domain architecture, Protein kinase spans tyrosine 12 to phenylalanine 267. Residues leucine 18–valine 26 and lysine 41 contribute to the ATP site. Catalysis depends on aspartate 135, which acts as the Proton acceptor. An activation loop region spans residues aspartate 153–glutamate 182. The NAF domain maps to arginine 298–isoleucine 333. Residues arginine 338–valine 367 form a PPI region.

Belongs to the protein kinase superfamily. CAMK Ser/Thr protein kinase family. SNF1 subfamily. Mn(2+) serves as cofactor.

It catalyses the reaction L-seryl-[protein] + ATP = O-phospho-L-seryl-[protein] + ADP + H(+). It carries out the reaction L-threonyl-[protein] + ATP = O-phospho-L-threonyl-[protein] + ADP + H(+). Its function is as follows. CIPK serine-threonine protein kinases interact with CBL proteins. Binding of a CBL protein to the regulatory NAF domain of CIPK protein lead to the activation of the kinase in a calcium-dependent manner. This chain is CBL-interacting protein kinase 14 (CIPK14), found in Oryza sativa subsp. japonica (Rice).